Reading from the N-terminus, the 31-residue chain is Cytochrome b6-f complex subunit 8 (31 aa).

Residues 5-25 (IVSMAWAALMVVFTFSLSLVI) form a helical membrane-spanning segment.

It belongs to the PetN family. As to quaternary structure, the 4 large subunits of the cytochrome b6-f complex are cytochrome b6, subunit IV (17 kDa polypeptide, PetD), cytochrome f and the Rieske protein, while the 4 small subunits are PetG, PetL, PetM and PetN. The complex functions as a dimer.

It is found in the plastid membrane. In terms of biological role, component of the cytochrome b6-f complex, which mediates electron transfer between photosystem II (PSII) and photosystem I (PSI), cyclic electron flow around PSI, and state transitions. This chain is Cytochrome b6-f complex subunit 8, found in Cuscuta gronovii (Common dodder).